Reading from the N-terminus, the 245-residue chain is 1-(5-phosphoribosyl)-5-[(5-phosphoribosylamino)methylideneamino] imidazole-4-carboxamide isomerase (245 aa).

D7 serves as the catalytic Proton acceptor. D129 serves as the catalytic Proton donor.

This sequence belongs to the HisA/HisF family.

Its subcellular location is the cytoplasm. It carries out the reaction 1-(5-phospho-beta-D-ribosyl)-5-[(5-phospho-beta-D-ribosylamino)methylideneamino]imidazole-4-carboxamide = 5-[(5-phospho-1-deoxy-D-ribulos-1-ylimino)methylamino]-1-(5-phospho-beta-D-ribosyl)imidazole-4-carboxamide. It functions in the pathway amino-acid biosynthesis; L-histidine biosynthesis; L-histidine from 5-phospho-alpha-D-ribose 1-diphosphate: step 4/9. The chain is 1-(5-phosphoribosyl)-5-[(5-phosphoribosylamino)methylideneamino] imidazole-4-carboxamide isomerase from Escherichia fergusonii (strain ATCC 35469 / DSM 13698 / CCUG 18766 / IAM 14443 / JCM 21226 / LMG 7866 / NBRC 102419 / NCTC 12128 / CDC 0568-73).